The chain runs to 148 residues: Receptor activity-modifying protein 1 (148 aa).

The signal sequence occupies residues 1–26 (MAPGLRGLPRRGLWLLLAHHLFMVTA). 3 cysteine pairs are disulfide-bonded: Cys-27-Cys-82, Cys-40-Cys-72, and Cys-57-Cys-104. Topologically, residues 27 to 118 (CRDPDYGTLI…RALRDPPNSI (92 aa)) are extracellular. The chain crosses the membrane as a helical span at residues 119–140 (LCPFIVLPITVTLLMTALVVWR). Topologically, residues 141–148 (SKRTEGIV) are cytoplasmic.

It belongs to the RAMP family. Heterodimer of CALCRL and RAMP1; the interaction induces allosteric modulation of CALCRL function and CGRP1/CALCA and CGRP2/CALCB ligand specificity. Heterodimer of CALCR and RAMP1; interaction forms the AMYR1 receptor complex for amylin/IAPP and CGRP1/CALCA ligands.

The protein resides in the cell membrane. Accessory protein that interacts with and modulates the function of G-protein coupled receptors including calcitonin gene-related peptide type 1 receptor (CALCRL) and calcitonin receptor (CALCR). Required for the transport of CALCRL to the plasma membrane. Together with CALCRL, form the receptor complex for the calcitonin gene-related peptides CGRP1/CALCA and CGRP2/CALCB. Together with CALCR, form the AMYR1 receptor complex for amylin/IAPP and CGRP1/CALCA. In Rattus norvegicus (Rat), this protein is Receptor activity-modifying protein 1.